A 215-amino-acid polypeptide reads, in one-letter code: Ribose-5-phosphate isomerase A (215 aa).

Residues 26 to 29 (TGST), 79 to 82 (DGAD), and 92 to 95 (KGGG) contribute to the substrate site. The active-site Proton acceptor is glutamate 101. Lysine 119 lines the substrate pocket.

The protein belongs to the ribose 5-phosphate isomerase family. As to quaternary structure, homodimer.

The catalysed reaction is aldehydo-D-ribose 5-phosphate = D-ribulose 5-phosphate. It functions in the pathway carbohydrate degradation; pentose phosphate pathway; D-ribose 5-phosphate from D-ribulose 5-phosphate (non-oxidative stage): step 1/1. Its function is as follows. Catalyzes the reversible conversion of ribose-5-phosphate to ribulose 5-phosphate. This Xanthomonas axonopodis pv. citri (strain 306) protein is Ribose-5-phosphate isomerase A.